Here is a 120-residue protein sequence, read N- to C-terminus: NAD(P)H-quinone oxidoreductase subunit 3, chloroplastic (120 aa).

3 consecutive transmembrane segments (helical) span residues 9-29, 64-84, and 88-108; these read IFWAFLMISSVIPILAFLISG, MFALVFVVFDVETVFLYPWAM, and VLGVSAFIEALIFVLIPIVGS.

The protein belongs to the complex I subunit 3 family. NDH is composed of at least 16 different subunits, 5 of which are encoded in the nucleus.

The protein localises to the plastid. It localises to the chloroplast thylakoid membrane. The enzyme catalyses a plastoquinone + NADH + (n+1) H(+)(in) = a plastoquinol + NAD(+) + n H(+)(out). It carries out the reaction a plastoquinone + NADPH + (n+1) H(+)(in) = a plastoquinol + NADP(+) + n H(+)(out). Functionally, NDH shuttles electrons from NAD(P)H:plastoquinone, via FMN and iron-sulfur (Fe-S) centers, to quinones in the photosynthetic chain and possibly in a chloroplast respiratory chain. The immediate electron acceptor for the enzyme in this species is believed to be plastoquinone. Couples the redox reaction to proton translocation, and thus conserves the redox energy in a proton gradient. In Illicium oligandrum (Star anise), this protein is NAD(P)H-quinone oxidoreductase subunit 3, chloroplastic.